Here is a 685-residue protein sequence, read N- to C-terminus: Putative protein FAR1-RELATED SEQUENCE 10 (685 aa).

An FAR1 domain is found at 69–161 (EYYSTFARKS…SNVHNHELLE (93 aa)). One can recognise an MULE domain in the interval 292–388 (VVVFDTSYRS…FMSHIVSKLA (97 aa)). The segment at 565 to 603 (GECCVIWNPENEEIQCSCKEFEHSGILCRHTLRVLTVKN) adopts an SWIM-type zinc-finger fold.

This sequence belongs to the FHY3/FAR1 family.

This chain is Putative protein FAR1-RELATED SEQUENCE 10 (FRS10), found in Arabidopsis thaliana (Mouse-ear cress).